Reading from the N-terminus, the 250-residue chain is Ubiquinone/menaquinone biosynthesis C-methyltransferase UbiE (250 aa).

S-adenosyl-L-methionine-binding positions include S73, D94, and 122-123; that span reads NA.

Belongs to the class I-like SAM-binding methyltransferase superfamily. MenG/UbiE family.

The catalysed reaction is a 2-demethylmenaquinol + S-adenosyl-L-methionine = a menaquinol + S-adenosyl-L-homocysteine + H(+). It carries out the reaction a 2-methoxy-6-(all-trans-polyprenyl)benzene-1,4-diol + S-adenosyl-L-methionine = a 5-methoxy-2-methyl-3-(all-trans-polyprenyl)benzene-1,4-diol + S-adenosyl-L-homocysteine + H(+). It participates in quinol/quinone metabolism; menaquinone biosynthesis; menaquinol from 1,4-dihydroxy-2-naphthoate: step 2/2. The protein operates within cofactor biosynthesis; ubiquinone biosynthesis. Functionally, methyltransferase required for the conversion of demethylmenaquinol (DMKH2) to menaquinol (MKH2) and the conversion of 2-polyprenyl-6-methoxy-1,4-benzoquinol (DDMQH2) to 2-polyprenyl-3-methyl-6-methoxy-1,4-benzoquinol (DMQH2). The chain is Ubiquinone/menaquinone biosynthesis C-methyltransferase UbiE from Legionella pneumophila (strain Corby).